The sequence spans 165 residues: Lipoprotein signal peptidase (165 aa).

Transmembrane regions (helical) follow at residues 9 to 29, 69 to 89, and 98 to 118; these read FLAI…VLLY, KYFL…FLFL, and IRFS…DIVF. Catalysis depends on residues Asp-124 and Asp-142. Residues 133-153 traverse the membrane as a helical segment; the sequence is WFFPTFNFADIFISLGTLIFI.

Belongs to the peptidase A8 family.

It is found in the cell inner membrane. It catalyses the reaction Release of signal peptides from bacterial membrane prolipoproteins. Hydrolyzes -Xaa-Yaa-Zaa-|-(S,diacylglyceryl)Cys-, in which Xaa is hydrophobic (preferably Leu), and Yaa (Ala or Ser) and Zaa (Gly or Ala) have small, neutral side chains.. It functions in the pathway protein modification; lipoprotein biosynthesis (signal peptide cleavage). In terms of biological role, this protein specifically catalyzes the removal of signal peptides from prolipoproteins. The chain is Lipoprotein signal peptidase from Chlamydia abortus (strain DSM 27085 / S26/3) (Chlamydophila abortus).